Consider the following 215-residue polypeptide: Oligoribonuclease (215 aa).

Residues 5 to 170 (LVWIDCEMTG…ADIHESIREL (166 aa)) form the Exonuclease domain. Tyr127 is an active-site residue. The tract at residues 196–215 (LGPPGKDAADTDSAAGHTTG) is disordered.

The protein belongs to the oligoribonuclease family.

Its subcellular location is the cytoplasm. Its function is as follows. 3'-to-5' exoribonuclease specific for small oligoribonucleotides. The sequence is that of Oligoribonuclease from Mycobacterium sp. (strain JLS).